Reading from the N-terminus, the 202-residue chain is Phospholipase A2 inhibitor gamma subunit A (202 aa).

The N-terminal stretch at 1-19 (MKSLQIICLLFIFVARGSC) is a signal peptide. 8 disulfide bridges follow: Cys22–Cys47, Cys25–Cys32, Cys40–Cys68, Cys74–Cys95, Cys96–Cys101, Cys119–Cys144, Cys137–Cys166, and Cys170–Cys192. N-linked (GlcNAc...) asparagine glycosylation occurs at Asn177.

This sequence belongs to the CNF-like-inhibitor family. Heterodimer of subunit A and subunit B. Post-translationally, N-glycosylated. In terms of tissue distribution, expressed by the liver. Not expressed in esophagus, stomach, pancreas, spleen, gall bladder, small intestine, rectum, kidney, trachea, lung, testis and body fat.

The protein localises to the secreted. In terms of biological role, inhibits the enzymatic activity of all phospholipase A2 (PA2) groups. The chain is Phospholipase A2 inhibitor gamma subunit A from Elaphe quadrivirgata (Japanese four-lined ratsnake).